The sequence spans 448 residues: Ribosomal protein uS12 methylthiotransferase RimO (448 aa).

The region spanning 7-123 is the MTTase N-terminal domain; that stretch reads EKVSLVSLGC…IAEIIAEKKQ (117 aa). Residues cysteine 16, cysteine 52, cysteine 86, cysteine 161, cysteine 165, and cysteine 168 each contribute to the [4Fe-4S] cluster site. The region spanning 147–377 is the Radical SAM core domain; that stretch reads SSPHYTAYLK…MRTQARVSFK (231 aa). The TRAM domain occupies 380–448; it reads RTLVDSEEDV…DYDLIGEIVD (69 aa).

The protein belongs to the methylthiotransferase family. RimO subfamily. Requires [4Fe-4S] cluster as cofactor.

The protein resides in the cytoplasm. The enzyme catalyses L-aspartate(89)-[ribosomal protein uS12]-hydrogen + (sulfur carrier)-SH + AH2 + 2 S-adenosyl-L-methionine = 3-methylsulfanyl-L-aspartate(89)-[ribosomal protein uS12]-hydrogen + (sulfur carrier)-H + 5'-deoxyadenosine + L-methionine + A + S-adenosyl-L-homocysteine + 2 H(+). Functionally, catalyzes the methylthiolation of an aspartic acid residue of ribosomal protein uS12. This chain is Ribosomal protein uS12 methylthiotransferase RimO, found in Citrifermentans bemidjiense (strain ATCC BAA-1014 / DSM 16622 / JCM 12645 / Bem) (Geobacter bemidjiensis).